A 146-amino-acid polypeptide reads, in one-letter code: Hemoglobin subunit beta (146 aa).

One can recognise a Globin domain in the interval histidine 2–histidine 146. Residues histidine 63 and histidine 92 each contribute to the heme b site.

Belongs to the globin family. In terms of assembly, heterotetramer of two alpha chains and two beta chains. Red blood cells.

Functionally, involved in oxygen transport from the lung to the various peripheral tissues. This Ciconia ciconia (White stork) protein is Hemoglobin subunit beta (HBB).